Reading from the N-terminus, the 368-residue chain is Quinolinate synthase (368 aa).

Residues histidine 46 and serine 63 each contribute to the iminosuccinate site. Residue cysteine 110 participates in [4Fe-4S] cluster binding. Iminosuccinate is bound by residues 141-143 (YVN) and serine 162. Cysteine 230 is a [4Fe-4S] cluster binding site. Residues 256 to 258 (HPE) and threonine 273 each bind iminosuccinate. Residue cysteine 320 coordinates [4Fe-4S] cluster.

The protein belongs to the quinolinate synthase family. Type 3 subfamily. The cofactor is [4Fe-4S] cluster.

It is found in the cytoplasm. It carries out the reaction iminosuccinate + dihydroxyacetone phosphate = quinolinate + phosphate + 2 H2O + H(+). It participates in cofactor biosynthesis; NAD(+) biosynthesis; quinolinate from iminoaspartate: step 1/1. Catalyzes the condensation of iminoaspartate with dihydroxyacetone phosphate to form quinolinate. This Bacillus cereus (strain B4264) protein is Quinolinate synthase.